The sequence spans 230 residues: V-type proton ATPase subunit E (230 aa).

The protein belongs to the V-ATPase E subunit family. As to quaternary structure, V-ATPase is a heteromultimeric enzyme composed of a peripheral catalytic V1 complex (components A to H) attached to an integral membrane V0 proton pore complex (components: a, c, c', c'' and d).

Subunit of the peripheral V1 complex of vacuolar ATPase essential for assembly or catalytic function. V-ATPase is responsible for acidifying a variety of intracellular compartments in eukaryotic cells. In Citrus unshiu (Satsuma mandarin), this protein is V-type proton ATPase subunit E (VATE).